The primary structure comprises 309 residues: Ribosomal RNA small subunit methyltransferase H (309 aa).

S-adenosyl-L-methionine-binding positions include 33 to 35, aspartate 53, phenylalanine 79, aspartate 100, and glutamine 107; that span reads GGH.

This sequence belongs to the methyltransferase superfamily. RsmH family.

It localises to the cytoplasm. The enzyme catalyses cytidine(1402) in 16S rRNA + S-adenosyl-L-methionine = N(4)-methylcytidine(1402) in 16S rRNA + S-adenosyl-L-homocysteine + H(+). In terms of biological role, specifically methylates the N4 position of cytidine in position 1402 (C1402) of 16S rRNA. This chain is Ribosomal RNA small subunit methyltransferase H, found in Clostridium botulinum (strain ATCC 19397 / Type A).